We begin with the raw amino-acid sequence, 158 residues long: NADPH-dependent 7-cyano-7-deazaguanine reductase (158 aa).

Residue Cys56 is the Thioimide intermediate of the active site. The active-site Proton donor is Asp63. Substrate is bound by residues 78-80 (VES) and 97-98 (HE).

Belongs to the GTP cyclohydrolase I family. QueF type 1 subfamily.

Its subcellular location is the cytoplasm. It catalyses the reaction 7-aminomethyl-7-carbaguanine + 2 NADP(+) = 7-cyano-7-deazaguanine + 2 NADPH + 3 H(+). It participates in tRNA modification; tRNA-queuosine biosynthesis. Functionally, catalyzes the NADPH-dependent reduction of 7-cyano-7-deazaguanine (preQ0) to 7-aminomethyl-7-deazaguanine (preQ1). The sequence is that of NADPH-dependent 7-cyano-7-deazaguanine reductase from Rhodopseudomonas palustris (strain HaA2).